The following is a 312-amino-acid chain: Ankyrin repeat family A protein 2 (312 aa).

ANK repeat units lie at residues 147–179 (ANSLSAHQLAAQGEMLYLATRIEQENVINHTDE), 180–212 (EGFTPLMWAAAHGQIAVVEFLLQNGADPQLLGK), 213–245 (GRESALSLACSKGYTDIVKMLLDCGVDVNEYDW), 246–278 (NGGTPLLYAVHGNHVKCVKMLLENGADPTIETD), and 279–312 (SGYNSMDLAVALGYRGVQQAIESHLLKLLQNIRE).

In terms of assembly, interacts (via ANK repeats) with CCDC8 (via PxLPxI/L motif); mediates the interaction with the 3M complex which is composed of CCDC8, CUL7 and OBSL1. Interacts (via ANK repeats) with HDAC4 (via PxLPxI/L motif). Interacts (via ANK repeats) with HDAC5 (via PxLPxI/L motif). Interacts (via ANK repeats) with LRP2/megalin (via PxLPxI/L motif). Interacts (via ANK repeats) with RFX7 (via PxLPxI/L motif). Interacts with AHRR. Interacts with NEK6.

The protein resides in the cytoplasm. Its subcellular location is the cytoskeleton. It is found in the membrane. In terms of biological role, may regulate the interaction between the 3M complex and the histone deacetylases HDAC4 and HDAC5. May also regulate LRP2/megalin. This chain is Ankyrin repeat family A protein 2 (Ankra2), found in Mus musculus (Mouse).